A 326-amino-acid chain; its full sequence is Peroxidase 1 (326 aa).

The first 22 residues, 1–22 (MASSRVILALLLAAAAVMASSA), serve as a signal peptide directing secretion. The residue at position 23 (Gln23) is a Pyrrolidone carboxylic acid. 4 disulfides stabilise this stretch: Cys33–Cys112, Cys66–Cys71, Cys118–Cys322, and Cys196–Cys231. The active-site Proton acceptor is the His64. Residues Asp65, Val68, Gly70, Asp72, and Ser74 each coordinate Ca(2+). 2 N-linked (GlcNAc...) asparagine glycosylation sites follow: Asn82 and Asn153. Pro159 provides a ligand contact to substrate. Asn164 is a glycosylation site (N-linked (GlcNAc...) asparagine). His189 lines the heme b pocket. Thr190 contributes to the Ca(2+) binding site. Asn205 and Asn237 each carry an N-linked (GlcNAc...) asparagine glycan. Residues Asp244, Ser247, and Asp252 each contribute to the Ca(2+) site.

The protein belongs to the peroxidase family. Classical plant (class III) peroxidase subfamily. Ca(2+) is required as a cofactor. It depends on heme b as a cofactor.

Its subcellular location is the secreted. It carries out the reaction 2 a phenolic donor + H2O2 = 2 a phenolic radical donor + 2 H2O. Removal of H(2)O(2), oxidation of toxic reductants, biosynthesis and degradation of lignin, suberization, auxin catabolism, response to environmental stresses such as wounding, pathogen attack and oxidative stress. These functions might be dependent on each isozyme/isoform in each plant tissue. The sequence is that of Peroxidase 1 (PRX74) from Oryza sativa subsp. japonica (Rice).